We begin with the raw amino-acid sequence, 382 residues long: MTEHAIKYRLIKKEKHTGARLGEIITPHGTFPTPMFMPVGTQATVKTMSPEELKTLGSGIILSNTYHLWLRPGDELVAEAGGLHKFMNWDQPILTDSGGFQVYSLVQNKKNITEEGVKFKSHLDGRELFLNPEKAISIQNNLGSDIMMSFDECPPFYQPYDYVKASVERTSRWAERGLNAHRRPNDQGLFGIVQGAGFEDLRRQSARDLTSMDFAGYSIGGLAVGESHKEMNAVLDFTTPMLPEDKPRYLMGVGAPDSLIDGVIRGVDMFDCVLPTRIARNGTLMTHFGRVNIRNAKYEHDFTPLDPMCDCYTCTNYTRAYLRHLIKADETFGLRLCSYHNLHFLVNLMKDVRGAIMDDNLLEFREDFCERYGYNQPNAKDF.

Asp96 (proton acceptor) is an active-site residue. Residues 96–100 (DSGGF), Asp151, Gln194, and Gly221 contribute to the substrate site. An RNA binding region spans residues 252-258 (GVGAPDS). Asp271 serves as the catalytic Nucleophile. Residues 276-280 (TRIAR) form an RNA binding; important for wobble base 34 recognition region. Zn(2+) contacts are provided by Cys309, Cys311, Cys314, and His340.

It belongs to the queuine tRNA-ribosyltransferase family. As to quaternary structure, homodimer. Within each dimer, one monomer is responsible for RNA recognition and catalysis, while the other monomer binds to the replacement base PreQ1. Zn(2+) serves as cofactor.

The enzyme catalyses 7-aminomethyl-7-carbaguanine + guanosine(34) in tRNA = 7-aminomethyl-7-carbaguanosine(34) in tRNA + guanine. It participates in tRNA modification; tRNA-queuosine biosynthesis. Catalyzes the base-exchange of a guanine (G) residue with the queuine precursor 7-aminomethyl-7-deazaguanine (PreQ1) at position 34 (anticodon wobble position) in tRNAs with GU(N) anticodons (tRNA-Asp, -Asn, -His and -Tyr). Catalysis occurs through a double-displacement mechanism. The nucleophile active site attacks the C1' of nucleotide 34 to detach the guanine base from the RNA, forming a covalent enzyme-RNA intermediate. The proton acceptor active site deprotonates the incoming PreQ1, allowing a nucleophilic attack on the C1' of the ribose to form the product. After dissociation, two additional enzymatic reactions on the tRNA convert PreQ1 to queuine (Q), resulting in the hypermodified nucleoside queuosine (7-(((4,5-cis-dihydroxy-2-cyclopenten-1-yl)amino)methyl)-7-deazaguanosine). This is Queuine tRNA-ribosyltransferase from Lactococcus lactis subsp. lactis (strain IL1403) (Streptococcus lactis).